Reading from the N-terminus, the 931-residue chain is Synaptopodin (931 aa).

2 disordered regions span residues 56-78 (EEEG…APAI) and 113-243 (ASVS…MEGY). Ser134 carries the phosphoserine modification. Over residues 136 to 148 (TEKDLKEAKERSQ) the composition is skewed to basic and acidic residues. Composition is skewed to polar residues over residues 153-164 (QLTTPPSSNSRG) and 188-200 (PKLS…TGHP). A phosphoserine mark is found at Ser202, Ser222, and Ser258. Residues 214 to 232 (PTSPSKPGSPKHSSSQSPS) show a composition bias toward low complexity. A disordered region spans residues 280–420 (GLHLSQNRET…SSSGPPAADL (141 aa)). 2 stretches are compositionally biased toward polar residues: residues 282-293 (HLSQNRETQQSS) and 309-370 (INQN…NTPS). Residues 373 to 384 (DGQRPVPAEEVR) show a composition bias toward basic and acidic residues. Residues Ser490 and Ser514 each carry the phosphoserine modification. 2 disordered regions span residues 542-591 (RRPL…KGQV) and 691-711 (SPRI…EASG). A Phosphothreonine modification is found at Thr549. The PPxY motif signature appears at 551-554 (PPTY). Over residues 556 to 568 (ETLSTAPVASQVR) the composition is skewed to polar residues. Ser569 is subject to Phosphoserine. Positions 569-580 (SPPSYSTLYPSS) are enriched in low complexity. The PPxY motif motif lies at 570–573 (PPSY). 4 positions are modified to phosphoserine: Ser691, Ser742, Ser746, and Ser767. At Thr771 the chain carries Phosphothreonine. The tract at residues 775 to 918 (SLYHGYLPEN…RPSFSTRNAG (144 aa)) is disordered. Low complexity predominate over residues 816–841 (SSRATSSRASSRTVSPRAASPAKPSS). Ser835 is subject to Phosphoserine. Omega-N-methylarginine is present on Arg850. Ser856 carries the phosphoserine modification. Residues 874–895 (VQDSLQPTAVSPTYSSDISPVS) are compositionally biased toward polar residues.

The protein belongs to the synaptopodin family. In terms of assembly, interacts with BAIAP1. Interacts with actin. Interacts (via PPxY motifs) with WWC1 (via WW domains). In terms of processing, O-glycosylated. Expressed at high levels in brain and at moderate, but still significant levels in the heart, skeletal muscle, lung and kidney. In brain, expressed in the cerebral cortex, hippocampus, olfactory bulb and striatum.

Its subcellular location is the cytoplasm. The protein localises to the cytoskeleton. It is found in the cell junction. The protein resides in the tight junction. It localises to the perikaryon. Its subcellular location is the cell projection. The protein localises to the dendritic spine. It is found in the postsynaptic density. The protein resides in the synapse. It localises to the cytosol. Its function is as follows. Actin-associated protein that may play a role in modulating actin-based shape and motility of dendritic spines and renal podocyte foot processes. Seems to be essential for the formation of spine apparatuses in spines of telencephalic neurons, which is involved in synaptic plasticity. The polypeptide is Synaptopodin (Synpo) (Rattus norvegicus (Rat)).